A 259-amino-acid polypeptide reads, in one-letter code: Dihydroorotate dehydrogenase B (NAD(+)), electron transfer subunit (259 aa).

The FAD-binding FR-type domain occupies 2 to 102 (MQKQNMIVVN…LGPLGHGFPV (101 aa)). FAD is bound by residues 53 to 56 (RPIS), 70 to 72 (LYR), and 77 to 78 (GT). Residues cysteine 221, cysteine 226, cysteine 229, and cysteine 246 each contribute to the [2Fe-2S] cluster site.

It belongs to the PyrK family. As to quaternary structure, heterotetramer of 2 PyrK and 2 PyrD type B subunits. [2Fe-2S] cluster is required as a cofactor. FAD serves as cofactor.

It functions in the pathway pyrimidine metabolism; UMP biosynthesis via de novo pathway; orotate from (S)-dihydroorotate (NAD(+) route): step 1/1. Its function is as follows. Responsible for channeling the electrons from the oxidation of dihydroorotate from the FMN redox center in the PyrD type B subunit to the ultimate electron acceptor NAD(+). This Bacillus cereus (strain 03BB102) protein is Dihydroorotate dehydrogenase B (NAD(+)), electron transfer subunit.